A 134-amino-acid chain; its full sequence is Arsenate reductase (134 aa).

Residues C11, C83, and C90 each act as nucleophile in the active site. Intrachain disulfides connect C11–C83 and C83–C90.

The protein belongs to the low molecular weight phosphotyrosine protein phosphatase family. Thioredoxin-coupled ArsC subfamily.

It is found in the cytoplasm. It catalyses the reaction arsenate + [thioredoxin]-dithiol + H(+) = arsenite + [thioredoxin]-disulfide + H2O. Functionally, catalyzes the reduction of arsenate [As(V)] to arsenite [As(III)]. The protein is Arsenate reductase of Bacillus anthracis (strain A0248).